Reading from the N-terminus, the 248-residue chain is 3-deoxy-manno-octulosonate cytidylyltransferase (248 aa).

It belongs to the KdsB family.

It localises to the cytoplasm. The catalysed reaction is 3-deoxy-alpha-D-manno-oct-2-ulosonate + CTP = CMP-3-deoxy-beta-D-manno-octulosonate + diphosphate. It participates in nucleotide-sugar biosynthesis; CMP-3-deoxy-D-manno-octulosonate biosynthesis; CMP-3-deoxy-D-manno-octulosonate from 3-deoxy-D-manno-octulosonate and CTP: step 1/1. It functions in the pathway bacterial outer membrane biogenesis; lipopolysaccharide biosynthesis. Its function is as follows. Activates KDO (a required 8-carbon sugar) for incorporation into bacterial lipopolysaccharide in Gram-negative bacteria. The sequence is that of 3-deoxy-manno-octulosonate cytidylyltransferase from Alteromonas mediterranea (strain DSM 17117 / CIP 110805 / LMG 28347 / Deep ecotype).